A 640-amino-acid chain; its full sequence is Probable serine/threonine-protein kinase samkA (640 aa).

One can recognise an SAM domain in the interval tryptophan 21–tyrosine 84. Residues phenylalanine 73 to asparagine 100 are a coiled coil. The tract at residues tyrosine 84–threonine 165 is disordered. Residues tyrosine 191–phenylalanine 437 enclose the Protein kinase domain. ATP is bound by residues isoleucine 197 to valine 205 and lysine 221. Aspartate 312 acts as the Proton acceptor in catalysis. Residues glutamine 448–glutamate 482 are disordered. The span at serine 453 to threonine 465 shows a compositional bias: low complexity.

The protein belongs to the protein kinase superfamily. Ser/Thr protein kinase family.

It carries out the reaction L-seryl-[protein] + ATP = O-phospho-L-seryl-[protein] + ADP + H(+). The catalysed reaction is L-threonyl-[protein] + ATP = O-phospho-L-threonyl-[protein] + ADP + H(+). This Dictyostelium discoideum (Social amoeba) protein is Probable serine/threonine-protein kinase samkA (samkA).